The sequence spans 114 residues: MNKQDPKRSNEPPVWLMFSAGGTISAICFPVLLLILGVLLPLGLVPVENIVAFAHTWFGKLVILAVTIFPMWAGMHRVHHGLHDLKIHFPAGGWVFYGLSALYSVIVFFAVIAL.

3 helical membrane passes run 27-47, 50-70, and 94-114; these read ICFP…LVPV, IVAF…TIFP, and WVFY…VIAL.

Belongs to the FrdD family. Part of an enzyme complex containing four subunits: a flavoprotein (FrdA), an iron-sulfur protein (FrdB), and two hydrophobic anchor proteins (FrdC and FrdD).

It is found in the cell inner membrane. Its function is as follows. Anchors the catalytic components of the fumarate reductase complex to the cell membrane, binds quinones. The polypeptide is Fumarate reductase subunit D (Actinobacillus pleuropneumoniae serotype 3 (strain JL03)).